The following is a 1001-amino-acid chain: Kinesin-like protein KIN-14P (1001 aa).

One can recognise a Calponin-homology (CH) domain in the interval Ala-53–Glu-172. Residues Asn-284–Ser-300 show a composition bias toward basic and acidic residues. Positions Asn-284 to Glu-322 are disordered. The region spanning Asn-426–Val-748 is the Kinesin motor domain. Position 509 to 516 (Gly-509 to Thr-516) interacts with ATP. A coiled-coil region spans residues Asn-756–Glu-784. Disordered stretches follow at residues Pro-804–Arg-830 and Glu-890–Lys-1001. Over residues Pro-972 to Leu-984 the composition is skewed to polar residues.

The protein belongs to the TRAFAC class myosin-kinesin ATPase superfamily. Kinesin family. KIN-14 subfamily.

This is Kinesin-like protein KIN-14P from Oryza sativa subsp. japonica (Rice).